Here is a 289-residue protein sequence, read N- to C-terminus: Bis(5'-nucleosyl)-tetraphosphatase, symmetrical (289 aa).

It belongs to the Ap4A hydrolase family.

The catalysed reaction is P(1),P(4)-bis(5'-adenosyl) tetraphosphate + H2O = 2 ADP + 2 H(+). Its function is as follows. Hydrolyzes diadenosine 5',5'''-P1,P4-tetraphosphate to yield ADP. The sequence is that of Bis(5'-nucleosyl)-tetraphosphatase, symmetrical from Pseudomonas fluorescens (strain ATCC BAA-477 / NRRL B-23932 / Pf-5).